Here is a 923-residue protein sequence, read N- to C-terminus: Isoleucine--tRNA ligase (923 aa).

Residues 57–67 carry the 'HIGH' region motif; sequence PYANGHIHIGH. Residue Glu560 coordinates L-isoleucyl-5'-AMP. The 'KMSKS' region motif lies at 601 to 605; it reads KMSKS. Position 604 (Lys604) interacts with ATP. Zn(2+) contacts are provided by Cys895, Cys898, Cys915, and Cys918.

It belongs to the class-I aminoacyl-tRNA synthetase family. IleS type 1 subfamily. Monomer. The cofactor is Zn(2+).

It localises to the cytoplasm. The catalysed reaction is tRNA(Ile) + L-isoleucine + ATP = L-isoleucyl-tRNA(Ile) + AMP + diphosphate. Catalyzes the attachment of isoleucine to tRNA(Ile). As IleRS can inadvertently accommodate and process structurally similar amino acids such as valine, to avoid such errors it has two additional distinct tRNA(Ile)-dependent editing activities. One activity is designated as 'pretransfer' editing and involves the hydrolysis of activated Val-AMP. The other activity is designated 'posttransfer' editing and involves deacylation of mischarged Val-tRNA(Ile). This Geobacter sulfurreducens (strain ATCC 51573 / DSM 12127 / PCA) protein is Isoleucine--tRNA ligase.